Here is a 931-residue protein sequence, read N- to C-terminus: Dymeclin (931 aa).

Disordered stretches follow at residues 1-53, 599-618, and 839-931; these read MGVA…SSTT, SPSK…NTNN, and DANN…EKTN. The N-myristoyl glycine moiety is linked to residue Gly-2. 2 stretches are compositionally biased toward low complexity: residues 27 to 49 and 601 to 618; these read NNNK…NNNN and SKIN…NTNN. A compositionally biased stretch (polar residues) spans 839–858; the sequence is DANNFTPKKQLSSDQLHSPP. Composition is skewed to low complexity over residues 859–876 and 889–901; these read TNTT…SSNT and QLQQ…NQEQ. A compositionally biased stretch (polar residues) spans 919-931; it reads TTGVELSSTEKTN.

It belongs to the dymeclin family.

The sequence is that of Dymeclin (dym) from Dictyostelium discoideum (Social amoeba).